A 384-amino-acid polypeptide reads, in one-letter code: Chaperone protein DnaJ (384 aa).

Residues 5 to 70 (DYYEVLGVSK…DKKAAYDRYG (66 aa)) enclose the J domain. Positions 16–47 (ASSDDIKKGYRRKAKELHPDRNKDDPNAEAQF) are disordered. The span at 31 to 47 (ELHPDRNKDDPNAEAQF) shows a compositional bias: basic and acidic residues. Residues 143 to 221 (GLQKTINVPT…CQGAGRVEKD (79 aa)) form a CR-type zinc finger. Cysteine 156, cysteine 159, cysteine 173, cysteine 176, cysteine 195, cysteine 198, cysteine 209, and cysteine 212 together coordinate Zn(2+). CXXCXGXG motif repeat units lie at residues 156 to 163 (CKTCNGSG), 173 to 180 (CPTCSGMG), 195 to 202 (CPTCSGLG), and 209 to 216 (CKSCQGAG).

This sequence belongs to the DnaJ family. Homodimer. Requires Zn(2+) as cofactor.

It is found in the cytoplasm. Participates actively in the response to hyperosmotic and heat shock by preventing the aggregation of stress-denatured proteins and by disaggregating proteins, also in an autonomous, DnaK-independent fashion. Unfolded proteins bind initially to DnaJ; upon interaction with the DnaJ-bound protein, DnaK hydrolyzes its bound ATP, resulting in the formation of a stable complex. GrpE releases ADP from DnaK; ATP binding to DnaK triggers the release of the substrate protein, thus completing the reaction cycle. Several rounds of ATP-dependent interactions between DnaJ, DnaK and GrpE are required for fully efficient folding. Also involved, together with DnaK and GrpE, in the DNA replication of plasmids through activation of initiation proteins. This chain is Chaperone protein DnaJ, found in Roseobacter denitrificans (strain ATCC 33942 / OCh 114) (Erythrobacter sp. (strain OCh 114)).